A 231-amino-acid polypeptide reads, in one-letter code: Orotidine 5'-phosphate decarboxylase (231 aa).

Substrate contacts are provided by residues Asp-11, Lys-33, 60–69 (DLKFHDIPNT), Thr-120, Arg-181, Gln-190, Gly-210, and Arg-211. Lys-62 (proton donor) is an active-site residue.

The protein belongs to the OMP decarboxylase family. Type 1 subfamily. Homodimer.

The catalysed reaction is orotidine 5'-phosphate + H(+) = UMP + CO2. It participates in pyrimidine metabolism; UMP biosynthesis via de novo pathway; UMP from orotate: step 2/2. Its function is as follows. Catalyzes the decarboxylation of orotidine 5'-monophosphate (OMP) to uridine 5'-monophosphate (UMP). This is Orotidine 5'-phosphate decarboxylase from Vibrio atlanticus (strain LGP32) (Vibrio splendidus (strain Mel32)).